The sequence spans 408 residues: LL-diaminopimelate aminotransferase (408 aa).

Substrate is bound by residues Tyr15 and Gly42. Pyridoxal 5'-phosphate-binding positions include Tyr72, 108-109 (SK), Tyr132, Asn187, Tyr218, and 246-248 (SFS). Substrate is bound by residues Lys109, Tyr132, and Asn187. The residue at position 249 (Lys249) is an N6-(pyridoxal phosphate)lysine. Pyridoxal 5'-phosphate-binding residues include Arg257 and Asn292. Substrate is bound by residues Asn292 and Arg388.

This sequence belongs to the class-I pyridoxal-phosphate-dependent aminotransferase family. LL-diaminopimelate aminotransferase subfamily. As to quaternary structure, homodimer. The cofactor is pyridoxal 5'-phosphate.

The enzyme catalyses (2S,6S)-2,6-diaminopimelate + 2-oxoglutarate = (S)-2,3,4,5-tetrahydrodipicolinate + L-glutamate + H2O + H(+). It functions in the pathway amino-acid biosynthesis; L-lysine biosynthesis via DAP pathway; LL-2,6-diaminopimelate from (S)-tetrahydrodipicolinate (aminotransferase route): step 1/1. Involved in the synthesis of meso-diaminopimelate (m-DAP or DL-DAP), required for both lysine and peptidoglycan biosynthesis. Catalyzes the direct conversion of tetrahydrodipicolinate to LL-diaminopimelate. The chain is LL-diaminopimelate aminotransferase from Prochlorococcus marinus (strain MIT 9211).